Consider the following 1085-residue polypeptide: SLIT-ROBO Rho GTPase-activating protein 1 (1085 aa).

The F-BAR domain maps to 19–314 (SQVKEIRAQL…AVDNLEPRSD (296 aa)). Residues 351-390 (VQAELMLRYQQLQSRLATLKIENEEVKKTTEATLQTIQDM) are a coiled coil. Position 416 is a phosphoserine (Ser416). The tract at residues 475–496 (YMTTRPPNVPPKPQKHRKSRPR) is disordered. A Rho-GAP domain is found at 506–694 (GDLETFVKDS…TIIIHHETIF (189 aa)). The region spanning 743 to 802 (CEPIEAIAKFDYVGRSARELSFKKGASLLLYHRASEDWWEGRHNGIDGLVPHQYIVVQDM) is the SH3 domain. The segment covering 808–822 (DTLSQKADSEASSGP) has biased composition (polar residues). The segment at 808 to 954 (DTLSQKADSE…TGFNDHKPLD (147 aa)) is disordered. A phosphoserine mark is found at Ser835 and Ser917. Residues 922–931 (SRHDSLKKID) are compositionally biased toward basic and acidic residues. Ser932 is subject to Phosphoserine. Residues 937 to 946 (RSTSSGQYTG) are compositionally biased toward polar residues. Residues 956–985 (ETIAQDIEETMNTALNELRELERQSTAKHA) adopt a coiled-coil conformation. Residues 997-1011 (KNSPTPATSTESLSP) show a composition bias toward polar residues. 2 disordered regions span residues 997 to 1038 (KNSP…MSTF) and 1051 to 1085 (KPPA…SCTM). Ser999 bears the Phosphoserine mark. Position 1001 is a phosphothreonine (Thr1001). The span at 1027-1037 (STSSSSDTMST) shows a compositional bias: low complexity. A Phosphoserine modification is found at Ser1032.

As to quaternary structure, homodimer. Forms a heterooligomer with SRGAP2 and SRGAP3 through its F-BAR domain. Interacts with ROBO1, CDC42 and RHOA. Interacts with FASLG. As to expression, expressed in brain, lung, kidney, and testis.

GTPase-activating protein for RhoA and Cdc42 small GTPases. Together with CDC42 seems to be involved in the pathway mediating the repulsive signaling of Robo and Slit proteins in neuronal migration. SLIT2, probably through interaction with ROBO1, increases the interaction of SRGAP1 with ROBO1 and inactivates CDC42. This chain is SLIT-ROBO Rho GTPase-activating protein 1 (SRGAP1), found in Homo sapiens (Human).